A 124-amino-acid polypeptide reads, in one-letter code: Large ribosomal subunit protein bL12 (124 aa).

This sequence belongs to the bacterial ribosomal protein bL12 family. As to quaternary structure, homodimer. Part of the ribosomal stalk of the 50S ribosomal subunit. Forms a multimeric L10(L12)X complex, where L10 forms an elongated spine to which 2 to 4 L12 dimers bind in a sequential fashion. Binds GTP-bound translation factors.

In terms of biological role, forms part of the ribosomal stalk which helps the ribosome interact with GTP-bound translation factors. Is thus essential for accurate translation. The protein is Large ribosomal subunit protein bL12 of Azobacteroides pseudotrichonymphae genomovar. CFP2.